Reading from the N-terminus, the 441-residue chain is Mitochondrial inner membrane protein OXA1L (441 aa).

Residues 1-113 (MALALMCGRR…QAAAEQSFAE (113 aa)) lie on the Mitochondrial intermembrane side of the membrane. The helical transmembrane segment at 114 to 134 (LGLGSYTPVGLIQNLLEFMHV) threads the bilayer. Over 135-139 (NLGLP) the chain is Mitochondrial matrix. The chain crosses the membrane as a helical span at residues 140-160 (WWGAIAACTVLARCLVFPLIV). Over 161 to 212 (KGQREAAKIHNHLPEIQKFSARIREAKLTGNHTEFYRASSEMTFYQKKHDIK) the chain is Mitochondrial intermembrane. A helical membrane pass occupies residues 213 to 233 (LFRPLILPLTQAPIFISFFIA). The Mitochondrial matrix portion of the chain corresponds to 234 to 260 (LREMANLPVPSLQTGGLWWFQDLTLSD). The helical transmembrane segment at 261 to 281 (PIYVLPLVVTATMWGVLELGA) threads the bilayer. At 282–298 (ETGMQSSDLQWMRNFIR) the chain is on the mitochondrial intermembrane side. A helical transmembrane segment spans residues 299–319 (LMPLAVLPITIHFPTAVFMYW). At 320–441 (LSSNMFSLGQ…SKQPWRDTLG (122 aa)) the chain is on the mitochondrial matrix side. Ser-364 carries the post-translational modification Phosphoserine. Thr-400 bears the Phosphothreonine mark. The tract at residues 405–441 (PLLQHGKNDPPNTPNSSSSSSSSNKAKSKQPWRDTLG) is disordered. Residues 418 to 429 (PNSSSSSSSSNK) show a composition bias toward low complexity.

It belongs to the OXA1/ALB3/YidC family. In terms of assembly, monomer; predominantly monomeric at low salt concentrations. Homooligomer; predominantly homooligomeric at high salt concentrations. Associates with the mitochondrial ribosome. Associates preferentially as a dimer with the large ribosomal subunit 39S of the mitochondrial ribosome. Interacts with OXA1L; promoting cotranslational quality control in mitochondria.

It localises to the mitochondrion inner membrane. Its function is as follows. Mitochondrial membrane insertase that mediates the cotranslational insertion of integral membrane proteins into the mitochondrial inner membrane. Essential for the activity and assembly of cytochrome oxidase. Required for the correct biogenesis of ATP synthase and complex I in mitochondria. This chain is Mitochondrial inner membrane protein OXA1L (OXA1L), found in Bos taurus (Bovine).